The primary structure comprises 459 residues: Putrescine aminotransferase (459 aa).

Pyridoxal 5'-phosphate is bound by residues 150–151 (GT) and Q274. K300 bears the N6-(pyridoxal phosphate)lysine mark. Pyridoxal 5'-phosphate is bound at residue T332.

Belongs to the class-III pyridoxal-phosphate-dependent aminotransferase family. Putrescine aminotransferase subfamily. Pyridoxal 5'-phosphate is required as a cofactor.

It catalyses the reaction an alkane-alpha,omega-diamine + 2-oxoglutarate = an omega-aminoaldehyde + L-glutamate. The catalysed reaction is putrescine + 2-oxoglutarate = 1-pyrroline + L-glutamate + H2O. The enzyme catalyses cadaverine + 2-oxoglutarate = 5-aminopentanal + L-glutamate. It participates in amine and polyamine degradation; putrescine degradation; 4-aminobutanal from putrescine (transaminase route): step 1/1. Catalyzes the aminotransferase reaction from putrescine to 2-oxoglutarate, leading to glutamate and 4-aminobutanal, which spontaneously cyclizes to form 1-pyrroline. This is the first step in one of two pathways for putrescine degradation, where putrescine is converted into 4-aminobutanoate (gamma-aminobutyrate or GABA) via 4-aminobutanal. Also functions as a cadaverine transaminase in a a L-lysine degradation pathway to succinate that proceeds via cadaverine, glutarate and L-2-hydroxyglutarate. The polypeptide is Putrescine aminotransferase (Salmonella paratyphi B (strain ATCC BAA-1250 / SPB7)).